The sequence spans 483 residues: MGFTLAIVGRPNVGKSTLFNRLVGRKLALVDDLPGVTRDRRIHDAKLYDLKFQVIDTAGLEEAANDSLEARMRAQTEAAISEADAVLFVIDAKAGITPADSTFAEAVRRSGKPVVLVANKAEARGSEAGMYDAFQLGLGEPCPISAKHGQGMPDLRDAIVELLGEERVFAEERQEEAADEVFTPAAVGALVGDDIEDPDAEEIPAYDATKPLRIAIVGRPNAGKSTLINTMLGEDRLLTGPEAGITRDSISADWEWHGRKIKLFDTAGMRRKARVQEKLEKLSVADGLRAIRFAEVVIIVLDATIPFEKQDLQIADLIIREGRAPVIAFNKWDLIEDRQMVLADLYEKTARLLPQVRGLRAVPISGERGQGIDKLMENVVKTHEIWNRRISTGRLNRWLEGVIAHQPPPAVSGRRLKVKYMTQVKTRPPGFVVSCSRPNAMPQSYVRYFINGLRETFDMPGVPIRLSLRTSDNPFAGRAKKKK.

2 EngA-type G domains span residues 3–167 (FTLA…GEER) and 212–387 (LRIA…EIWN). GTP-binding positions include 9–16 (GRPNVGKS), 56–60 (DTAGL), 119–122 (NKAE), 218–225 (GRPNAGKS), 265–269 (DTAGM), and 330–333 (NKWD). Residues 388-472 (RRISTGRLNR…PIRLSLRTSD (85 aa)) form the KH-like domain.

The protein belongs to the TRAFAC class TrmE-Era-EngA-EngB-Septin-like GTPase superfamily. EngA (Der) GTPase family. Associates with the 50S ribosomal subunit.

Functionally, GTPase that plays an essential role in the late steps of ribosome biogenesis. The sequence is that of GTPase Der from Brucella ovis (strain ATCC 25840 / 63/290 / NCTC 10512).